Consider the following 293-residue polypeptide: Non-homologous end joining protein Ku (293 aa).

Residues 10–195 (ISFGLVHIPV…KLDKRELEMA (186 aa)) form the Ku domain. The segment at 216–229 (SDKIMKLVEEKAAK) is required for dimerization. A disordered region spans residues 260–293 (RSRAGGGKDKGSEKAGADAKGRAKSGASRSRRKA). The span at 265 to 280 (GGKDKGSEKAGADAKG) shows a compositional bias: basic and acidic residues.

The protein belongs to the prokaryotic Ku family. Homodimer, may form higher-order multimers on DNA. Non-dimerized protein does not stimulate LigD ligase activity. Probably interacts with LigD.

With LigD forms a non-homologous end joining (NHEJ) DNA repair enzyme, which repairs dsDNA breaks with reduced fidelity. Stimulates rNTP addition to DSB and end joining (ligation) of linear DNA by LigD, on 3'-overhangs and probably also 5'-overhangs and blunt dsDNA breaks. Binds both ends of linear dsDNA protecting it from exonuclease activity. This Pseudomonas aeruginosa (strain ATCC 15692 / DSM 22644 / CIP 104116 / JCM 14847 / LMG 12228 / 1C / PRS 101 / PAO1) protein is Non-homologous end joining protein Ku.